The chain runs to 39 residues: uncharacterized protein (39 aa).

An N-terminal signal peptide occupies residues 1–21 (MHLRSRWWLALLYCKDPVSRS).

This is an uncharacterized protein from Saccharomyces cerevisiae (strain ATCC 204508 / S288c) (Baker's yeast).